The sequence spans 152 residues: Holo-[acyl-carrier-protein] synthase (152 aa).

Residues D7 and E60 each coordinate Mg(2+).

Belongs to the P-Pant transferase superfamily. AcpS family. The cofactor is Mg(2+).

Its subcellular location is the cytoplasm. The catalysed reaction is apo-[ACP] + CoA = holo-[ACP] + adenosine 3',5'-bisphosphate + H(+). Transfers the 4'-phosphopantetheine moiety from coenzyme A to a Ser of acyl-carrier-protein. This chain is Holo-[acyl-carrier-protein] synthase, found in Bifidobacterium adolescentis (strain ATCC 15703 / DSM 20083 / NCTC 11814 / E194a).